Here is a 341-residue protein sequence, read N- to C-terminus: S-adenosylmethionine:tRNA ribosyltransferase-isomerase (341 aa).

This sequence belongs to the QueA family. As to quaternary structure, monomer.

Its subcellular location is the cytoplasm. The catalysed reaction is 7-aminomethyl-7-carbaguanosine(34) in tRNA + S-adenosyl-L-methionine = epoxyqueuosine(34) in tRNA + adenine + L-methionine + 2 H(+). It participates in tRNA modification; tRNA-queuosine biosynthesis. Transfers and isomerizes the ribose moiety from AdoMet to the 7-aminomethyl group of 7-deazaguanine (preQ1-tRNA) to give epoxyqueuosine (oQ-tRNA). The protein is S-adenosylmethionine:tRNA ribosyltransferase-isomerase of Clostridioides difficile (strain 630) (Peptoclostridium difficile).